The chain runs to 94 residues: Small ribosomal subunit protein bS16 (94 aa).

This sequence belongs to the bacterial ribosomal protein bS16 family.

In Thermosipho africanus (strain TCF52B), this protein is Small ribosomal subunit protein bS16.